An 868-amino-acid chain; its full sequence is MASFPETDFQICLLCKEMCGSPAPLSSNSSASSSSSQTSTSSGGGGGGPGAAARRLHVLPCLAFCRPCLEAHRGGAPGEPLKLRCPVCDQKVVLAEAAGMDARPSSAFLLSNLLDAVVATADEPPPKNGRAGAAAGAGGHGSNHRHHAHHAHPRAAASAPPPPLPPAPPPPAPPRSAPGGPAGSPSALLLRRPHGCSSCDEGNAASSRCLDCQEHLCDNCVRAHQRVRLTKDHYIERGPPGPAAAAAAAAAQQLGLGPPFPGAPFSLLSVFPERLGFCQHHDDEVLHLYCDTCSVPICRECTVGRHGGHSFVYLQEALQDSRALTIQLLADAQQGRQAIQLSIEQAQTVAEQVEMKAKVVQSEVKAVTARHKKALEERECELLWKVEKIRQVKAKSLYLQVEKLRQNLNKLESTISAVQQVLEEGRALDILLARDRMLAQVQELKTVRSLLQPQEDDRVMFTPPDQALYLAIKSFGFVSSGAFAPLTKATGDGLKRALQGKVASFTVIGYDHDGEPRLSGGDLMSAVVLGPDGNLFGAEVSDQQNGTYVVSYRPQLEGEHLVSVTLCNQHIENSPFKVVVKSGRSYVGIGLPGLSFGSEGDSDGKLCRPWGVSVDKEGYIVVADRSNNRIQVFKPCGAFHHKFGTLGSRPGQFDRPAGVACDASRRIVVADKDNHRIQIFTFEGQFLLKFGEKGTKNGQFNYPWDVAVNSEGKILVSDTRNHRIQLFGPDGVFLNKYGFEGALWKHFDSPRGVAFNHEGHLVVTDFNNHRLLVIHPDCQSARFLGSEGTGNGQFLRPQGVAVDQEGRIIVADSRNHRVQMFESNGSFLCKFGAQGSGFGQMDRPSGIAVTPDGMIVVVDFGNNRILIF.

Alanine 2 is modified (N-acetylalanine). The RING-type zinc-finger motif lies at 12-89; the sequence is CLLCKEMCGS…PLKLRCPVCD (78 aa). Over residues 26–41 the composition is skewed to low complexity; it reads SSNSSASSSSSQTSTS. 2 disordered regions span residues 26–50 and 121–186; these read SSNS…GGPG and ADEP…GSPS. Residues 142 to 153 are compositionally biased toward basic residues; that stretch reads SNHRHHAHHAHP. The segment covering 159 to 176 has biased composition (pro residues); sequence APPPPLPPAPPPPAPPRS. Residues 177–186 are compositionally biased toward low complexity; the sequence is APGGPAGSPS. Residues 191-238 form a B box-type 1; atypical zinc finger; it reads RRPHGCSSCDEGNAASSRCLDCQEHLCDNCVRAHQRVRLTKDHYIERG. A B box-type 2 zinc finger spans residues 273-314; it reads ERLGFCQHHDDEVLHLYCDTCSVPICRECTVGRHGGHSFVYL. Cysteine 278, histidine 281, cysteine 301, and histidine 306 together coordinate Zn(2+). Residues 391-427 adopt a coiled-coil conformation; that stretch reads QVKAKSLYLQVEKLRQNLNKLESTISAVQQVLEEGRA. The stretch at 479–580 is one Filamin repeat; that stretch reads SSGAFAPLTK…IENSPFKVVV (102 aa). NHL repeat units lie at residues 593–636, 640–683, 687–730, 734–777, 781–824, and 828–868; these read GLSF…FKPC, HHKF…FTFE, LLKF…FGPD, LNKY…IHPD, ARFL…FESN, and LCKF…ILIF.

It belongs to the TRIM/RBCC family. In terms of assembly, interacts (via NHL repeats) with AGO2; the interaction increases in presence of RNA. Interacts with HSP90AA1. Interacts (via NHL repeats) with MOV10, PABPC1, PUM1, PUM2, STAU2, XRN1 and XRN2 in an RNA-dependent manner. Interacts with SHCBP1; leading to enhance its stability. In terms of processing, autoubiquitinated.

It localises to the cytoplasm. The protein resides in the P-body. The catalysed reaction is S-ubiquitinyl-[E2 ubiquitin-conjugating enzyme]-L-cysteine + [acceptor protein]-L-lysine = [E2 ubiquitin-conjugating enzyme]-L-cysteine + N(6)-ubiquitinyl-[acceptor protein]-L-lysine.. Its pathway is protein modification; protein ubiquitination. Functionally, E3 ubiquitin-protein ligase that cooperates with the microRNAs (miRNAs) machinery and promotes embryonic stem cells proliferation and maintenance. Binds to miRNAs and associates with AGO2, participating in post-transcriptional repression of transcripts such as CDKN1A. In addition, participates in post-transcriptional mRNA repression in a miRNA independent mechanism. Facilitates the G1-S transition to promote rapid embryonic stem cell self-renewal by repressing CDKN1A expression. Required to maintain proliferation and prevent premature differentiation of neural progenitor cells during early neural development: positively regulates FGF signaling by controlling the stability of SHCBP1. Specific regulator of miRNA biogenesis. Binds to miRNA MIR29A hairpin and postranscriptionally modulates MIR29A levels, which indirectly regulates TET proteins expression. The polypeptide is E3 ubiquitin-protein ligase TRIM71 (TRIM71) (Bos taurus (Bovine)).